Here is a 358-residue protein sequence, read N- to C-terminus: uncharacterized protein (358 aa).

Belongs to the serpin family. Poxviruses subfamily.

This is an uncharacterized protein from Fowlpox virus (strain NVSL) (FPV).